Reading from the N-terminus, the 350-residue chain is Cyclin-O (350 aa).

The tract at residues 1–89 is disordered; it reads MVTPCPTSPS…GSPLPGPAQP (89 aa). Residues 28-42 are compositionally biased toward basic residues; it reads PVKKSRRPRLRRKQP. At S81 the chain carries Phosphoserine.

This sequence belongs to the cyclin family. Present in respiratory cells (at protein level).

It localises to the cytoplasm. The protein resides in the nucleus. It is found in the nucleolus. Specifically required for generation of multiciliated cells, possibly by promoting a cell cycle state compatible with centriole amplification and maturation. Acts downstream of MCIDAS to promote mother centriole amplification and maturation in preparation for apical docking. This Homo sapiens (Human) protein is Cyclin-O.